The chain runs to 193 residues: Glycerol-3-phosphate acyltransferase (193 aa).

Helical transmembrane passes span 4–24 (LALI…AVLI), 56–76 (GLVL…GYFL), 80–100 (PLLL…PLFF), 116–136 (APIG…IVLI), and 152–174 (PLFT…CLIV).

This sequence belongs to the PlsY family. Probably interacts with PlsX.

The protein resides in the cell inner membrane. It carries out the reaction an acyl phosphate + sn-glycerol 3-phosphate = a 1-acyl-sn-glycero-3-phosphate + phosphate. The protein operates within lipid metabolism; phospholipid metabolism. In terms of biological role, catalyzes the transfer of an acyl group from acyl-phosphate (acyl-PO(4)) to glycerol-3-phosphate (G3P) to form lysophosphatidic acid (LPA). This enzyme utilizes acyl-phosphate as fatty acyl donor, but not acyl-CoA or acyl-ACP. The protein is Glycerol-3-phosphate acyltransferase of Aliivibrio salmonicida (strain LFI1238) (Vibrio salmonicida (strain LFI1238)).